A 1416-amino-acid polypeptide reads, in one-letter code: Isonitrile lipopeptide synthase (1416 aa).

Residues 188–215 adopt a coiled-coil conformation; sequence LRETAKVAEALRRQADAVQRELTAEAGQ. A Carrier domain is found at 965-1028; the sequence is RVWSRHLGRP…NLVCDLGSNP (64 aa). O-(pantetheine 4'-phosphoryl)serine is present on Ser988.

It belongs to the ATP-dependent AMP-binding enzyme family. It depends on pantetheine 4'-phosphate as a cofactor.

It catalyses the reaction 2 a (3R)-3-isocyanyl-fatty acyl-[ACP] + L-lysine + ATP + 2 NADPH = an isonitrile lipopeptide + 2 holo-[ACP] + AMP + diphosphate + 2 NADP(+). Its function is as follows. Nonribosomal peptide synthetase (NRPS) involved in the biosynthesis of a unique class of isonitrile lipopeptides (INLPs) that seem to play a role in metal acquisition in M.marinum. Catalyzes the final step in the pathway, i.e. the condensation of a (3R)-3-isocyanyl-fatty acyl-[ACP] to both amino groups of a lysine, producing isonitrile lipopeptides. The chain is Isonitrile lipopeptide synthase from Mycobacterium marinum (strain ATCC BAA-535 / M).